A 726-amino-acid chain; its full sequence is MVVDSYQKKETKKYRNFIPRREQILFLLKTDKDLISQKKLEKKFSINSQEQKKALRRRLRAMERDGQIIYTRNRCYITPENLKIVTGKVIGHRDGYGFLRTETFKDDLWLSIEQMKLCIHGDVILAHIVKSDRKGRNSAKVLKILRPNDVLIVGRYCVDNKKKFVIPNDTRFNFKIFILDSLISNENISIGTIVVVKLRENATKKSKIQGTIVEVLGKEMGTNLAIKIALRTHCIPYLWSKEVEYQLCGIKSKINEKDFKNRIDLRHLPFFTIDEEDARDFDDAIFCKKKTNGEKGWKLWVAISDVSYYIQPDTALDKAASKRGTSIYFPSLVIPMLPEKISIDVCSLNPNAERLSLICEMNLSNKGELITYKHYEAVICSHGRFTYNEIFKIWNGDIELCFKYKKLLKYIQNLSSLQKILKKYNVSKRGIYFENIEAKFILDSNYRIKNISQNIRNDAHKFIESCMILANIASAEFVKKHKSPVLFRNHDRPDKDSIINFRSVLKKLGLSLLGGEIPESTDYSELLKKISTRPDYEMIQTILLRSMKQAVYSPDNRGHFGLSLSSYVHFTSPIRRYPDLLVHRVIKNLLLKEKNLSKYHLYNLNEVTKIGLHCSMTERRADEATRDVLDWLKCDFMQKKIGDVLTGVISNVTSFGFFVRLNQFFIDGLVHIATLIDDYYYFDSIGLKLIGKSSKNTYCLGDTLKVKVISVNLNERKIELSLYMSR.

The 329-residue stretch at 262–590 (RIDLRHLPFF…LVHRVIKNLL (329 aa)) folds into the RNB domain. In terms of domain architecture, S1 motif spans 642–723 (GDVLTGVISN…NERKIELSLY (82 aa)).

It belongs to the RNR ribonuclease family. RNase R subfamily. As to quaternary structure, monomer.

The protein localises to the cytoplasm. The catalysed reaction is Exonucleolytic cleavage in the 3'- to 5'-direction to yield nucleoside 5'-phosphates.. 3'-5' exoribonuclease that releases 5'-nucleoside monophosphates and is involved in maturation of structured RNAs. In Buchnera aphidicola subsp. Schizaphis graminum (strain Sg), this protein is Ribonuclease R.